The sequence spans 412 residues: NADH-quinone oxidoreductase subunit D (412 aa).

It belongs to the complex I 49 kDa subunit family. NDH-1 is composed of 14 different subunits. Subunits NuoB, C, D, E, F, and G constitute the peripheral sector of the complex.

Its subcellular location is the cell inner membrane. It carries out the reaction a quinone + NADH + 5 H(+)(in) = a quinol + NAD(+) + 4 H(+)(out). Functionally, NDH-1 shuttles electrons from NADH, via FMN and iron-sulfur (Fe-S) centers, to quinones in the respiratory chain. The immediate electron acceptor for the enzyme in this species is believed to be ubiquinone. Couples the redox reaction to proton translocation (for every two electrons transferred, four hydrogen ions are translocated across the cytoplasmic membrane), and thus conserves the redox energy in a proton gradient. The sequence is that of NADH-quinone oxidoreductase subunit D from Sulfurimonas denitrificans (strain ATCC 33889 / DSM 1251) (Thiomicrospira denitrificans (strain ATCC 33889 / DSM 1251)).